A 97-amino-acid polypeptide reads, in one-letter code: Osteocalcin (97 aa).

The N-terminal stretch at 1 to 18 is a signal peptide; that stretch reads MKTLAILVLCSLAAICLT. Residues 19 to 52 constitute a propeptide that is removed on maturation; sequence SSASAGAQPAGDSPVQGGLFMEKDQASAVVRQTR. In terms of domain architecture, Gla spans 53 to 93; the sequence is AAKELTLAQTESLREVCETNMACDEMADAQGIVAAYQAFYG. Ca(2+) contacts are provided by Glu-63, Glu-67, Glu-70, and Asp-76. 4-carboxyglutamate occurs at positions 63, 67, and 70. The cysteines at positions 69 and 75 are disulfide-linked. Glu-77 is modified (4-carboxyglutamate).

This sequence belongs to the osteocalcin/matrix Gla protein family. In terms of processing, gamma-carboxyglutamate residues are formed by vitamin K dependent carboxylation by GGCX. These residues are essential for the binding of calcium. In the branchial arches, BGP is found outside the chondrocyte-containing zone. It is found in some cells in the basal zone of the branchial filaments, near the branchial arches, and within the extracellular matrix in the medial zone. In the vertebra, BGP is found in the mineralized bone matrix.

The protein localises to the secreted. Its function is as follows. The carboxylated form is one of the main organic components of the bone matrix, which constitutes 1-2% of the total bone protein. The carboxylated form binds strongly to apatite and calcium. This Argyrosomus regius (Meagre) protein is Osteocalcin (bglap).